Here is a 287-residue protein sequence, read N- to C-terminus: Formamidopyrimidine-DNA glycosylase (287 aa).

The Schiff-base intermediate with DNA role is filled by Pro-2. The active-site Proton donor is the Glu-3. Catalysis depends on Lys-60, which acts as the Proton donor; for beta-elimination activity. DNA is bound by residues His-100 and Arg-119. The segment at 249-283 (QVYGREGEPCRHCGTVIAKIKLGGRSAHFCPQCQP) adopts an FPG-type zinc-finger fold. The active-site Proton donor; for delta-elimination activity is the Arg-273.

Belongs to the FPG family. Monomer. Zn(2+) serves as cofactor.

It carries out the reaction Hydrolysis of DNA containing ring-opened 7-methylguanine residues, releasing 2,6-diamino-4-hydroxy-5-(N-methyl)formamidopyrimidine.. It catalyses the reaction 2'-deoxyribonucleotide-(2'-deoxyribose 5'-phosphate)-2'-deoxyribonucleotide-DNA = a 3'-end 2'-deoxyribonucleotide-(2,3-dehydro-2,3-deoxyribose 5'-phosphate)-DNA + a 5'-end 5'-phospho-2'-deoxyribonucleoside-DNA + H(+). Functionally, involved in base excision repair of DNA damaged by oxidation or by mutagenic agents. Acts as a DNA glycosylase that recognizes and removes damaged bases. Has a preference for oxidized purines, such as 7,8-dihydro-8-oxoguanine (8-oxoG). Has AP (apurinic/apyrimidinic) lyase activity and introduces nicks in the DNA strand. Cleaves the DNA backbone by beta-delta elimination to generate a single-strand break at the site of the removed base with both 3'- and 5'-phosphates. The polypeptide is Formamidopyrimidine-DNA glycosylase (mutM) (Synechocystis sp. (strain ATCC 27184 / PCC 6803 / Kazusa)).